The sequence spans 283 residues: Nucleoid occlusion protein (283 aa).

Positions 148–167 (EALAQRLGKGQSTIANKLRL) form a DNA-binding region, H-T-H motif.

Belongs to the ParB family.

Its subcellular location is the cytoplasm. It is found in the nucleoid. Functionally, effects nucleoid occlusion by binding relatively nonspecifically to DNA and preventing the assembly of the division machinery in the vicinity of the nucleoid, especially under conditions that disturb the cell cycle. It helps to coordinate cell division and chromosome segregation by preventing the formation of the Z ring through the nucleoid, which would cause chromosome breakage. This Bacillus subtilis (strain 168) protein is Nucleoid occlusion protein (noc).